The chain runs to 137 residues: Cellular retinoic acid-binding protein 1 (137 aa).

The Nuclear localization signal motif lies at Lys21 to Lys31. Arg132–Tyr134 contributes to the all-trans-retinoate binding site.

The protein belongs to the calycin superfamily. Fatty-acid binding protein (FABP) family.

The protein resides in the cytoplasm. In terms of biological role, cytosolic CRABPs may regulate the access of retinoic acid to the nuclear retinoic acid receptors. This Takifugu rubripes (Japanese pufferfish) protein is Cellular retinoic acid-binding protein 1 (crabp1).